The following is a 382-amino-acid chain: Mannitol-1-phosphate 5-dehydrogenase (382 aa).

Residue Ala-3–Gly-14 participates in NAD(+) binding. Lys-269 is modified (N6-acetyllysine).

It belongs to the mannitol dehydrogenase family.

It catalyses the reaction D-mannitol 1-phosphate + NAD(+) = beta-D-fructose 6-phosphate + NADH + H(+). The protein is Mannitol-1-phosphate 5-dehydrogenase of Escherichia coli (strain ATCC 8739 / DSM 1576 / NBRC 3972 / NCIMB 8545 / WDCM 00012 / Crooks).